The chain runs to 406 residues: MKAQRSFGLALSWPRVTAVFLVDVLILAVASHCPDSWQADHHVAWWVGVGVAAVVTLLSVVSYHGITVISGLATWVRDWSADPGTTLGAGCTPAIDHQRRFGRDTVGVREYNGRLVSVIEVTCGESGPSGRHWHRKSPVPMLPVVAVADGLRQFDIHLDGIDIVSVLVRGGVDAAKASASLQEWEPQGWKSEERAGDRTVADRRRTWLVLRMNPQRNVAAVACRDSLASTLVAATERLVQDLDGQSCAARPVTADELTEVDSAVLADLEPTWSRPGWRHLKHFNGYATSFWVTPSDITSETLDELCLPDSPEVGTTVVTVRLTTRVGSPALSAWVRYHSDTRLPKEVAAGLNRLTGRQLAAVRASLPAPTHRPLLVIPSRNLRDHDELVLPVGQELEHATSSFVGQ.

Transmembrane regions (helical) follow at residues 9–29 and 43–63; these read LALS…ILAV and VAWW…VVSY.

The protein belongs to the EccE family. In terms of assembly, part of the ESX-5 / type VII secretion system (T7SS), which is composed of cytosolic and membrane components. The ESX-5 membrane complex is composed of EccB5, EccC5, EccD5 and EccE5.

The protein resides in the cell inner membrane. Part of the ESX-5 specialized secretion system, which is responsible for the secretion of EsxN and a number of PE_PGRS and PPE proteins, including PPE41. The chain is ESX-5 secretion system protein EccE5 from Mycobacterium tuberculosis (strain ATCC 25618 / H37Rv).